The primary structure comprises 295 residues: NAD kinase (295 aa).

The active-site Proton acceptor is Asp-74. NAD(+) contacts are provided by residues Asp-74–Gly-75, Asn-148–Asp-149, His-159, Arg-176, Asp-178, and Thr-189–Ser-194.

Belongs to the NAD kinase family. A divalent metal cation serves as cofactor.

It is found in the cytoplasm. The catalysed reaction is NAD(+) + ATP = ADP + NADP(+) + H(+). Involved in the regulation of the intracellular balance of NAD and NADP, and is a key enzyme in the biosynthesis of NADP. Catalyzes specifically the phosphorylation on 2'-hydroxyl of the adenosine moiety of NAD to yield NADP. In Legionella pneumophila (strain Corby), this protein is NAD kinase.